Consider the following 202-residue polypeptide: Glycerol-3-phosphate acyltransferase (202 aa).

The next 6 helical transmembrane spans lie at asparagine 3–alanine 23, isoleucine 61–leucine 81, leucine 87–phenylalanine 107, glycine 118–isoleucine 138, isoleucine 144–asparagine 164, and leucine 167–leucine 187.

This sequence belongs to the PlsY family. In terms of assembly, probably interacts with PlsX.

Its subcellular location is the cell inner membrane. It catalyses the reaction an acyl phosphate + sn-glycerol 3-phosphate = a 1-acyl-sn-glycero-3-phosphate + phosphate. It functions in the pathway lipid metabolism; phospholipid metabolism. Catalyzes the transfer of an acyl group from acyl-phosphate (acyl-PO(4)) to glycerol-3-phosphate (G3P) to form lysophosphatidic acid (LPA). This enzyme utilizes acyl-phosphate as fatty acyl donor, but not acyl-CoA or acyl-ACP. The chain is Glycerol-3-phosphate acyltransferase from Campylobacter jejuni subsp. jejuni serotype O:6 (strain 81116 / NCTC 11828).